A 133-amino-acid polypeptide reads, in one-letter code: Small ribosomal subunit protein bS6 (133 aa).

Belongs to the bacterial ribosomal protein bS6 family.

Binds together with bS18 to 16S ribosomal RNA. This chain is Small ribosomal subunit protein bS6, found in Chlorobium luteolum (strain DSM 273 / BCRC 81028 / 2530) (Pelodictyon luteolum).